We begin with the raw amino-acid sequence, 139 residues long: uncharacterized protein (139 aa).

The chain crosses the membrane as a helical span at residues 22–38 (SVMSVCFMTMSATVLPI).

Its subcellular location is the membrane. This is an uncharacterized protein from Saccharomyces cerevisiae (strain ATCC 204508 / S288c) (Baker's yeast).